Consider the following 100-residue polypeptide: Putative PIN1-like protein (100 aa).

Residues 1–15 (MADEEKLPPGWEKRM) show a composition bias toward basic and acidic residues. Disordered regions lie at residues 1 to 52 (MADE…QGEP) and 69 to 100 (LDLA…REGL). A WW domain is found at 5–38 (EKLPPGWEKRMSRPSGRGYYFNHITNPSQWERPS). A compositionally biased stretch (polar residues) spans 27 to 44 (HITNPSQWERPSGNSSSG). Over residues 87–100 (QRLHPEDQGRREGL) the composition is skewed to basic and acidic residues.

This chain is Putative PIN1-like protein (PIN1P1), found in Homo sapiens (Human).